Reading from the N-terminus, the 600-residue chain is Proton channel OTOP1 (600 aa).

The segment at 1–50 is disordered; sequence MPGGPGAPSSPAASSGSSRAAPSGIAACPLSPPPLARGSPQASGPRRGAS. Over 1–56 the chain is Cytoplasmic; it reads MPGGPGAPSSPAASSGSSRAAPSGIAACPLSPPPLARGSPQASGPRRGASVPQKLA. The span at 7–27 shows a compositional bias: low complexity; that stretch reads APSSPAASSGSSRAAPSGIAA. Residues 57 to 78 form a helical membrane-spanning segment; it reads ETLSSQYGLNVFVAGLLFLLAW. Residues 79 to 86 are Extracellular-facing; the sequence is AVHATGVG. The chain crosses the membrane as a helical span at residues 87–110; that stretch reads KSDLLCVLTALMLLQLLWMLWYVG. Residues 111–128 lie on the Cytoplasmic side of the membrane; sequence RSYMQRRLIRPKDTHAGA. The chain crosses the membrane as a helical span at residues 129-151; the sequence is RWLRGSITLFAFITVVLGCLKVA. The Extracellular segment spans residues 152 to 161; the sequence is YFIGFSECLS. Residues 162-186 traverse the membrane as a helical segment; sequence ATEGVFPVTHAVHTLLQVYFLWGHA. The Cytoplasmic segment spans residues 187–194; that stretch reads KDIIMSFK. A helical membrane pass occupies residues 195-217; that stretch reads TLERFGVIHSVFTNLLLWANSVL. Topologically, residues 218-262 are extracellular; it reads NESKHQLNEHKERLITLGFGNITIVLDDHTPQCNCTPPALCSALS. Residues 263–288 traverse the membrane as a helical segment; it reads HGIYYLYPFNIEYQILASTMLYVLWK. Topologically, residues 289 to 309 are cytoplasmic; it reads NIGRRVDSSQHQKMQCRFDGV. A helical membrane pass occupies residues 310–332; sequence LVGSVLGLTVLAATIAVVVVYMI. At 333-342 the chain is on the extracellular side; it reads HIGRSKSKSE. A helical membrane pass occupies residues 343–368; that stretch reads SALIMFYLYAITVLLLMGAAGLVGSW. At 369-386 the chain is on the cytoplasmic side; sequence IYRVDEKSLDESKNPARK. Residues 387–411 traverse the membrane as a helical segment; sequence LDVDLLVATGSGSWLLSWGSILAIA. Over 412–421 the chain is Extracellular; sequence CAETRPPYTW. The helical transmembrane segment at 422–442 threads the bilayer; sequence YNLPYSVLVIVEKYVQNIFII. The Cytoplasmic portion of the chain corresponds to 443–532; it reads ESVHLEPEGV…QGGMKRRLLR (90 aa). The helical transmembrane segment at 533-551 threads the bilayer; it reads NITAFLFLCNISLWIPPAF. At 552-569 the chain is on the extracellular side; the sequence is GCRPEYDNGLEEIVFGFE. The chain crosses the membrane as a helical span at residues 570 to 593; it reads PWIIVVNLAMPFSIFYRMHAAAAL. The Cytoplasmic segment spans residues 594 to 600; the sequence is FEVYCKI.

Belongs to the otopetrin family. Homodimer. Interacts with STAT1, independently of STAT1 phosphorylation status. Expressed in thymus, heart, kidney, skin, vestibular system of the inner ear, sour taste cells, heart, uterus, dorsal root ganglion, adrenal gland, lactating mammary gland and stimulated mast cells. In the inner ear, expressed in the supporting cells in extrastriolar regions of the saccule and in the utricle, but not in the cochlea. Expressed in brown adipose tissue. Expressed in epididymal white adipose tissue (eWAT), as well as in inguinal fat, in obese animals, but hardly detectable in eWAT from lean mice. Expressed in acid-sensing taste receptor cells (PKD2L1-positive cells), but not in other types of taste cells (at protein level).

Its subcellular location is the cell membrane. The protein resides in the cell projection. It is found in the microvillus. The enzyme catalyses H(+)(in) = H(+)(out). Activated by both acid and alkali, with proton influx in response to extracellular acid and proton efflux during alkali stimulation. Inhibited by Zn(2+); this inhibition is thought to be pH-sensitive. Currents evoked in response to mild acid (pH 6.0) stimulus may also be mildly potentiated by exposure to Zn(2+). Activated by NH(4)Cl. Its function is as follows. Proton-selective ion channel. Biphasically modulated by acid and alkali, mediating proton influx and efflux in response to extracellular acid and base stimulation, respectively. Sour taste receptor, which carries inward currents in response to extracellular acidification. Sensor for ammonium chloride (NH(4)Cl) in taste receptor cells. NH(4)Cl acts by increasing the intracellular pH, thereby generating a driving force for proton entry through OTOP1 channel. Might also participate in alkaline sensation. Plays a role in the regulation of Ca(2+) flux in response to purigenic (ATP, ADP and UDP) stimuli, leading to increase in cytosolic Ca(2+) due to influx of extracellular calcium. May play this role by inhibiting P2Y purinoceptor-mediated Ca(2+) release in a Ca(2+)-dependent manner and promote an influx of Ca(2+) in response to ATP. Through this mechanism and possibly others, plays a role in the formation and function of calcium carbonate-based structures in the vestibular system of the inner ear, called otoconia, that sense gravity and linear acceleration. In obesity, may attenuate adipose tissue inflammation, through the negative regulation of IFNG signaling, hence may play an adaptive role in the maintainance of metabolic homeostasis. Following alkali activation, may also be permeable Na(+), K(+), Cs(+) and Li(+). This chain is Proton channel OTOP1, found in Mus musculus (Mouse).